Here is a 559-residue protein sequence, read N- to C-terminus: DNA ligase (559 aa).

Glu-247 contacts ATP. Catalysis depends on Lys-249, which acts as the N6-AMP-lysine intermediate. Residues Arg-254, Arg-269, Glu-299, Phe-339, Arg-414, and Lys-420 each contribute to the ATP site.

Belongs to the ATP-dependent DNA ligase family. The cofactor is Mg(2+).

It catalyses the reaction ATP + (deoxyribonucleotide)n-3'-hydroxyl + 5'-phospho-(deoxyribonucleotide)m = (deoxyribonucleotide)n+m + AMP + diphosphate.. DNA ligase that seals nicks in double-stranded DNA during DNA replication, DNA recombination and DNA repair. In Pyrococcus abyssi, this protein is DNA ligase.